Here is a 372-residue protein sequence, read N- to C-terminus: MPGVNTQTLYGWDMEHYFYDEMDTEEDFFKSTAPSEDIWKKFELLPTPPMSPSRTLDGDWLFPIPGDRLGWAPPKVLTCDEEYEGLHKFDPLDIFGNLGSIVIKDCMWSGLSTSHRLEKVAHGERAPVAALIQNSTAQKAARAASGTPVTGSQAAQCVSPAAVLELPVPHKKVAAGSSGSECRSDSSDDDEDDDEIDVVTVDNRPKRGRPPSRRTPVTITVSADPFGPCPKRFHVSLHRQQHNYAAPSPDTDPEDDFEIEPVSKRPRLESSSAPSSPLSSPATSDSEDSTEQRRNFLERKRRDDLRSRFQALREEIPGLSGSSKTSKVAILTQATDYLLQLHSSQRRQAQEKRKLKAKQQQLLRRISALQNS.

2 disordered regions span residues 172-226 (KVAA…ADPF) and 243-306 (NYAA…DDLR). A compositionally biased stretch (acidic residues) spans 187–197 (SDDDEDDDEID). A compositionally biased stretch (low complexity) spans 269-284 (ESSSAPSSPLSSPATS). The region spanning 289 to 341 (STEQRRNFLERKRRDDLRSRFQALREEIPGLSGSSKTSKVAILTQATDYLLQL) is the bHLH domain. Over residues 290 to 306 (TEQRRNFLERKRRDDLR) the composition is skewed to basic and acidic residues. Residues 341 to 369 (LHSSQRRQAQEKRKLKAKQQQLLRRISAL) are leucine-zipper.

In terms of assembly, efficient DNA binding requires dimerization with another bHLH protein. Binds DNA as a heterodimer with max. As to expression, uterus.

The protein localises to the nucleus. The chain is Protein L-Myc-1a from Danio rerio (Zebrafish).